The following is a 443-amino-acid chain: Trihelix transcription factor ASIL2 (443 aa).

Positions 1–82 (MEDDEDIRSQ…RPTGGGGRED (82 aa)) are disordered. Positions 38-48 (YSLTPPGNSSQ) are enriched in polar residues. Residues 64-78 (SGGGNNSSGRPTGGG) show a composition bias toward gly residues. Residues 84 to 144 (WSEAATAVLI…QCKNRIDTVK (61 aa)) enclose the Myb-like domain. 2 disordered regions span residues 238 to 350 (FGGS…GNKW) and 413 to 443 (RRMG…LGNN). The segment covering 239–249 (GGSGGGGGGGS) has biased composition (gly residues). Low complexity predominate over residues 271–286 (TLPQQGRTLPQQQQQG). The Bipartite nuclear localization signal motif lies at 290-303 (KRCSESKRWRFRKR). Over residues 333–350 (MKTEEKKKQDGDGVGNKW) the composition is skewed to basic and acidic residues. A coiled-coil region spans residues 360-414 (FGEAYEQTENAKLQQVVEMEKERMKFLKELELQRMQFFVKTQLEISQLKQQHGRR). Positions 428 to 443 (NNINAIVNNNNDLGNN) are enriched in low complexity.

The protein localises to the nucleus. Its function is as follows. Transcription regulator that may repress the maturation program during early embryogenesis. The sequence is that of Trihelix transcription factor ASIL2 from Arabidopsis thaliana (Mouse-ear cress).